Consider the following 283-residue polypeptide: Trafficking protein particle complex subunit 31 (283 aa).

Residues 1-16 (MSQRIIQPSASDQQFP) show a composition bias toward polar residues. Disordered regions lie at residues 1 to 20 (MSQR…GKSD) and 126 to 156 (SSKL…RLQE). Over residues 126–151 (SSKLSNASNSPGMLANSSTATSASAN) the composition is skewed to low complexity.

It belongs to the TRAPP small subunits family. BET3 subfamily. Part of the multisubunit TRAPP (transport protein particle) I complex composed of BET3, BET5, TRS20, TRS23, TRS31 and TRS33. Part of the multisubunit TRAPP (transport protein particle) II complex composed of BET3, BET5, TRS20, TRS23, TRS31, TRS33, TRS65, TRS85, TRS120 and TRS130. Part of the multisubunit TRAPP (transport protein particle) III complex composed of BET3, BET5, TRS20, TRS23, TRS31, TRS33 and TRS85.

Its subcellular location is the golgi apparatus. It is found in the cis-Golgi network. The protein localises to the endoplasmic reticulum. It localises to the preautophagosomal structure. Component of the TRAPP I, TRAPP II and TRAPP III complexes which act as guanine nucleotide exchange factors (GEF) for YPT1. TRAPP I plays a key role in the late stages of endoplasmic reticulum to Golgi traffic. TRAPP II plays a role in intra-Golgi transport. TRAPP III plays a role in autophagosome formation. The chain is Trafficking protein particle complex subunit 31 (TRS31) from Saccharomyces cerevisiae (strain ATCC 204508 / S288c) (Baker's yeast).